The sequence spans 338 residues: Protein UL141 (338 aa).

Residues 1–25 form the signal peptide; that stretch reads MCRRESLRTLPWLFWVLLSCPRLLE. At 37 to 278 the chain is on the extracellular side; that stretch reads DIAEKMWAEN…DTGMSPWATR (242 aa). 3 N-linked (GlcNAc...) asparagine; by host glycosylation sites follow: N117, N132, and N147. A helical transmembrane segment spans residues 279-299; it reads GIAAFLGFWSIFTVCFLCYLC. Residues 300-338 are Cytoplasmic-facing; sequence YLQCCGHWCPTPGRGRRGGEGYRRLPTYDSYPGVKKMKR.

In terms of assembly, interacts with human PVR. Interacts with human TNFRSF10A and TNFRSF10B. Forms a homodimer that engages two TNFRSF10B monomers.

It is found in the host endoplasmic reticulum membrane. Its function is as follows. Evasion of NK cell killing. Blocks surface expression of PVR which is a ligand for NK cell-activating receptors. Binds human PVR in the endoplasmic reticulum and prevents its maturation and transport to the cell surface. Targets also the natural killer cell activating ligand NECTIN2 for proteasome-mediated degradation. Additionally promotes intracellular retention of TNFRSF10A/TRAIL-R1 and TNFRSF10B/TRAIL-R2 and thus down-regulates their cell surface expression. This is Protein UL141 (UL141) from Human cytomegalovirus (strain Merlin) (HHV-5).